A 785-amino-acid chain; its full sequence is Probably inactive leucine-rich repeat receptor-like protein kinase At5g58150 (785 aa).

The signal sequence occupies residues 1-21; that stretch reads MRLSLWGSLLFFSFFVKHLTS. Residues 22 to 436 lie on the Extracellular side of the membrane; the sequence is LDPNTDAYHL…KVNKKNTGLK (415 aa). LRR repeat units follow at residues 64–88, 89–112, 114–136, 138–160, 161–184, 186–208, 210–232, 236–258, 259–283, 284–306, 307–330, 331–355, 357–377, and 379–405; these read SENV…TIGK, MSKL…LWSL, LLES…IGNF, SLHT…ISNL, VNLT…LVHC, SLLS…FGSA, PLLK…VLHE, TVDL…HKHN, WSSL…LSSA, HKLG…EIGK, LSAL…EISR, LSHL…SVKN, EVLD…LLEK, and AMMQ…TIQR. Asn-119 is a glycosylation site (N-linked (GlcNAc...) asparagine). Asn-162, Asn-198, Asn-216, and Asn-258 each carry an N-linked (GlcNAc...) asparagine glycan. 3 N-linked (GlcNAc...) asparagine glycosylation sites follow: Asn-314, Asn-319, and Asn-343. Residues Asn-385, Asn-390, and Asn-397 are each glycosylated (N-linked (GlcNAc...) asparagine). A helical membrane pass occupies residues 437–457; that stretch reads IGLGLAISMAFLLIGLLLILV. Residues 458–785 lie on the Cytoplasmic side of the membrane; it reads ALRVRRKSRT…GLLKDISPNY (328 aa). Phosphothreonine is present on residues Thr-510 and Thr-518. The region spanning 521–785 is the Protein kinase domain; the sequence is FDRGTMLWEG…GLLKDISPNY (265 aa). ATP-binding positions include 527-535 and Lys-549; that span reads LWEGKSGPT. Tyr-594 and Tyr-683 each carry phosphotyrosine.

This sequence belongs to the protein kinase superfamily. Ser/Thr protein kinase family.

The protein resides in the cell membrane. The protein is Probably inactive leucine-rich repeat receptor-like protein kinase At5g58150 of Arabidopsis thaliana (Mouse-ear cress).